We begin with the raw amino-acid sequence, 81 residues long: Gamma-conotoxin-like TxMEKL-0511 (81 aa).

Residues 1-19 (MEKLTILLLVAAVLLSIQA) form the signal peptide. A propeptide spanning residues 20-45 (LNQEKHQRAKINLLSKRKPPAERWWR) is cleaved from the precursor. 3 disulfide bridges follow: C49/C63, C56/C67, and C62/C72.

It belongs to the conotoxin O2 superfamily. As to expression, expressed by the venom duct.

Its subcellular location is the secreted. In terms of biological role, gamma-conotoxins may act on voltage-gated non-specific cation pacemaker channels (HCN). The protein is Gamma-conotoxin-like TxMEKL-0511 of Conus textile (Cloth-of-gold cone).